A 1050-amino-acid polypeptide reads, in one-letter code: uncharacterized protein (1050 aa).

3 coiled-coil regions span residues 1–420, 463–627, and 692–981; these read MEKV…TAKM, YSLL…IREL, and NDSK…NLLS.

This is an uncharacterized protein from Arabidopsis thaliana (Mouse-ear cress).